A 212-amino-acid polypeptide reads, in one-letter code: MSQEHQDVKTGTTTVGIVFDGGVILATERRATMGNLIASKKAKKVHAITDKIGMTIAGGVGDAQQLVRIINVECNLYEIRRGQKISVGAAATILSNYLNQNRFSPYYVQLLVGGVDTSGPSVYSVDAAGGATLEENFVSTGSGSLTAYGVLEDRFKPNMTEEEAIELAVRALRAAMLRDSASGEGYNVVIITQEKFEYLPEDKIAGYLPPAK.

Positions 1–11 (MSQEHQDVKTG) are cleaved as a propeptide — removed in mature form; by autocatalysis. Catalysis depends on T12, which acts as the Nucleophile.

It belongs to the peptidase T1B family. In terms of assembly, the 20S proteasome core is composed of 14 alpha and 14 beta subunits that assemble into four stacked heptameric rings, resulting in a barrel-shaped structure. The two inner rings, each composed of seven catalytic beta subunits, are sandwiched by two outer rings, each composed of seven alpha subunits. The catalytic chamber with the active sites is on the inside of the barrel. Has a gated structure, the ends of the cylinder being occluded by the N-termini of the alpha-subunits. Is capped at one or both ends by the proteasome regulatory ATPase, PAN.

The protein localises to the cytoplasm. The enzyme catalyses Cleavage of peptide bonds with very broad specificity.. The formation of the proteasomal ATPase PAN-20S proteasome complex, via the docking of the C-termini of PAN into the intersubunit pockets in the alpha-rings, triggers opening of the gate for substrate entry. Interconversion between the open-gate and close-gate conformations leads to a dynamic regulation of the 20S proteasome proteolysis activity. In terms of biological role, component of the proteasome core, a large protease complex with broad specificity involved in protein degradation. The protein is Proteasome subunit beta of Methanocorpusculum labreanum (strain ATCC 43576 / DSM 4855 / Z).